The primary structure comprises 163 residues: Ribosome maturation factor RimP (163 aa).

Belongs to the RimP family.

It is found in the cytoplasm. In terms of biological role, required for maturation of 30S ribosomal subunits. The sequence is that of Ribosome maturation factor RimP from Streptococcus mutans serotype c (strain ATCC 700610 / UA159).